The sequence spans 256 residues: Imidazole glycerol phosphate synthase subunit HisF (256 aa).

Residues Asp12 and Asp131 contribute to the active site.

The protein belongs to the HisA/HisF family. As to quaternary structure, heterodimer of HisH and HisF.

The protein resides in the cytoplasm. The catalysed reaction is 5-[(5-phospho-1-deoxy-D-ribulos-1-ylimino)methylamino]-1-(5-phospho-beta-D-ribosyl)imidazole-4-carboxamide + L-glutamine = D-erythro-1-(imidazol-4-yl)glycerol 3-phosphate + 5-amino-1-(5-phospho-beta-D-ribosyl)imidazole-4-carboxamide + L-glutamate + H(+). The protein operates within amino-acid biosynthesis; L-histidine biosynthesis; L-histidine from 5-phospho-alpha-D-ribose 1-diphosphate: step 5/9. Its function is as follows. IGPS catalyzes the conversion of PRFAR and glutamine to IGP, AICAR and glutamate. The HisF subunit catalyzes the cyclization activity that produces IGP and AICAR from PRFAR using the ammonia provided by the HisH subunit. The sequence is that of Imidazole glycerol phosphate synthase subunit HisF from Thermobifida fusca (strain YX).